The following is a 365-amino-acid chain: Cobalt-precorrin-5B C(1)-methyltransferase (365 aa).

Belongs to the CbiD family.

The catalysed reaction is Co-precorrin-5B + S-adenosyl-L-methionine = Co-precorrin-6A + S-adenosyl-L-homocysteine. It participates in cofactor biosynthesis; adenosylcobalamin biosynthesis; cob(II)yrinate a,c-diamide from sirohydrochlorin (anaerobic route): step 6/10. Its function is as follows. Catalyzes the methylation of C-1 in cobalt-precorrin-5B to form cobalt-precorrin-6A. This chain is Cobalt-precorrin-5B C(1)-methyltransferase, found in Variovorax paradoxus (strain S110).